The primary structure comprises 571 residues: Cilia- and flagella-associated protein 52 (571 aa).

10 WD repeats span residues 62–106 (GHGN…LLAR), 109–150 (LHKG…AICG), 156–195 (LNVG…RKIW), 288–327 (QSQG…ETLI), 330–364 (CHFE…TSSN), 366–405 (AHRI…QKLE), 410–449 (EHKS…RNQM), 451–490 (LANT…VIRE), 494–533 (SLSG…VTHV), and 536–571 (GHSG…PYTS).

This sequence belongs to the CFAP52 family. In terms of assembly, microtubule inner protein component of sperm flagellar doublet microtubules. Interacts with BRCA2. Interacts with the CCT chaperonin complex. Interacts with HSP70. Interacts with AK8. Interacts with CFAP45. Interacts with DNAI1. Interacts with IQDC.

The protein localises to the cytoplasm. Its subcellular location is the cytoskeleton. It is found in the cilium axoneme. It localises to the flagellum axoneme. Microtubule inner protein (MIP) part of the dynein-decorated doublet microtubules (DMTs) in cilia axoneme. Important for proper ciliary and flagellar beating. May act in cooperation with CFAP45 and axonemal dynein subunit DNAH11. May play a role in cell growth and/or survival. This chain is Cilia- and flagella-associated protein 52, found in Macaca fascicularis (Crab-eating macaque).